A 245-amino-acid polypeptide reads, in one-letter code: Large ribosomal subunit protein uL3 (245 aa).

An N5-methylglutamine modification is found at glutamine 152. The disordered stretch occupies residues 224-245 (RSKAVQAEAAAPAEAAAPEGDN). Over residues 230-245 (AEAAAPAEAAAPEGDN) the composition is skewed to low complexity.

This sequence belongs to the universal ribosomal protein uL3 family. In terms of assembly, part of the 50S ribosomal subunit. Forms a cluster with proteins L14 and L19. Post-translationally, methylated by PrmB.

Its function is as follows. One of the primary rRNA binding proteins, it binds directly near the 3'-end of the 23S rRNA, where it nucleates assembly of the 50S subunit. The protein is Large ribosomal subunit protein uL3 of Paracoccus denitrificans (strain Pd 1222).